The sequence spans 457 residues: Heme sensor protein HssS (457 aa).

The next 2 membrane-spanning stretches (helical) occupy residues 9–29 (IAIY…VLTN) and 164–184 (TFLA…VIAS). The HAMP domain occupies 186-238 (YSIIRPVKKLKLATERLIDGDFETPIKQTRKDEIGTLQYHFNKMRESLGQVDQ). The Histidine kinase domain maps to 246-456 (NVSHEIKTPL…TFTITLPNNS (211 aa)). Position 249 is a phosphohistidine; by autocatalysis (His-249).

In terms of processing, autophosphorylated.

The protein localises to the cell membrane. It catalyses the reaction ATP + protein L-histidine = ADP + protein N-phospho-L-histidine.. Member of the two-component regulatory system HssS/HssR involved in intracellular heme homeostasis and tempering of staphylococcal virulence. HssS functions as a heme sensor histidine kinase which is autophosphorylated at a histidine residue and transfers its phosphate group to an aspartate residue of HssR. HssR/HssS activates the expression of hrtAB, an efflux pump, in response to extracellular heme, hemin, hemoglobin or blood. The protein is Heme sensor protein HssS (hssS) of Staphylococcus aureus (strain Mu3 / ATCC 700698).